Consider the following 968-residue polypeptide: Isoleucine--tRNA ligase (968 aa).

The short motif at 68-78 (PYANGALHMGH) is the 'HIGH' region element. L-isoleucyl-5'-AMP is bound at residue glutamate 584. The 'KMSKS' region motif lies at 625-629 (KMSKS). An ATP-binding site is contributed by lysine 628. Residues cysteine 938, cysteine 941, cysteine 958, and cysteine 961 each coordinate Zn(2+).

The protein belongs to the class-I aminoacyl-tRNA synthetase family. IleS type 1 subfamily. In terms of assembly, monomer. The cofactor is Zn(2+).

It is found in the cytoplasm. The enzyme catalyses tRNA(Ile) + L-isoleucine + ATP = L-isoleucyl-tRNA(Ile) + AMP + diphosphate. Its function is as follows. Catalyzes the attachment of isoleucine to tRNA(Ile). As IleRS can inadvertently accommodate and process structurally similar amino acids such as valine, to avoid such errors it has two additional distinct tRNA(Ile)-dependent editing activities. One activity is designated as 'pretransfer' editing and involves the hydrolysis of activated Val-AMP. The other activity is designated 'posttransfer' editing and involves deacylation of mischarged Val-tRNA(Ile). The sequence is that of Isoleucine--tRNA ligase from Prochlorococcus marinus (strain MIT 9313).